We begin with the raw amino-acid sequence, 205 residues long: Holliday junction branch migration complex subunit RuvA (205 aa).

Residues 1–64 are domain I; it reads MIGRLKGILV…EDAQLLYGFI (64 aa). The segment at 65–143 is domain II; sequence HKEERSLFRL…SLMEASMGAE (79 aa). A flexible linker region spans residues 144–156; sequence REFVLKSNFTPAP. Residues 157-205 are domain III; it reads VAATVEEDAIAALLSLGYKPQQASKAVSSAFQEGMDPEQLIKAALKSML.

It belongs to the RuvA family. Homotetramer. Forms an RuvA(8)-RuvB(12)-Holliday junction (HJ) complex. HJ DNA is sandwiched between 2 RuvA tetramers; dsDNA enters through RuvA and exits via RuvB. An RuvB hexamer assembles on each DNA strand where it exits the tetramer. Each RuvB hexamer is contacted by two RuvA subunits (via domain III) on 2 adjacent RuvB subunits; this complex drives branch migration. In the full resolvosome a probable DNA-RuvA(4)-RuvB(12)-RuvC(2) complex forms which resolves the HJ.

Its subcellular location is the cytoplasm. The RuvA-RuvB-RuvC complex processes Holliday junction (HJ) DNA during genetic recombination and DNA repair, while the RuvA-RuvB complex plays an important role in the rescue of blocked DNA replication forks via replication fork reversal (RFR). RuvA specifically binds to HJ cruciform DNA, conferring on it an open structure. The RuvB hexamer acts as an ATP-dependent pump, pulling dsDNA into and through the RuvAB complex. HJ branch migration allows RuvC to scan DNA until it finds its consensus sequence, where it cleaves and resolves the cruciform DNA. The polypeptide is Holliday junction branch migration complex subunit RuvA (Shewanella amazonensis (strain ATCC BAA-1098 / SB2B)).